The chain runs to 569 residues: Glutamate--tRNA ligase (569 aa).

The 'HIGH' region motif lies at 99–109 (PEPNGYPTLGH).

It belongs to the class-I aminoacyl-tRNA synthetase family. Glutamate--tRNA ligase type 2 subfamily.

It is found in the cytoplasm. The enzyme catalyses tRNA(Glu) + L-glutamate + ATP = L-glutamyl-tRNA(Glu) + AMP + diphosphate. Catalyzes the attachment of glutamate to tRNA(Glu) in a two-step reaction: glutamate is first activated by ATP to form Glu-AMP and then transferred to the acceptor end of tRNA(Glu). The protein is Glutamate--tRNA ligase of Korarchaeum cryptofilum (strain OPF8).